Here is a 285-residue protein sequence, read N- to C-terminus: Sulfotransferase 2A6 (285 aa).

Residue 44-49 (KSGTNW) coordinates 3'-phosphoadenylyl sulfate. His99 acts as the Proton acceptor in catalysis. 3'-phosphoadenylyl sulfate-binding positions include Arg121, Ser129, Tyr184, 218 to 223 (SSFQAM), and 247 to 249 (RKG).

Belongs to the sulfotransferase 1 family. Oligomer.

The protein localises to the cytoplasm. It localises to the cytosol. The enzyme catalyses an alcohol + 3'-phosphoadenylyl sulfate = an alkyl sulfate + adenosine 3',5'-bisphosphate + H(+). It carries out the reaction glycolithocholate + 3'-phosphoadenylyl sulfate = sulfoglycolithocholate + adenosine 3',5'-bisphosphate + H(+). It catalyses the reaction taurolithocholate + 3'-phosphoadenylyl sulfate = taurolithocholate 3-sulfate + adenosine 3',5'-bisphosphate + H(+). The catalysed reaction is 3beta-hydroxyandrost-5-en-17-one + 3'-phosphoadenylyl sulfate = dehydroepiandrosterone 3-sulfate + adenosine 3',5'-bisphosphate + H(+). Its function is as follows. Sulfotransferase that utilizes 3'-phospho-5'-adenylyl sulfate (PAPS) as sulfonate donor to catalyze the sulfonation of the hydroxyl group of hydroxysteroids and bile acids. In Mus musculus (Mouse), this protein is Sulfotransferase 2A6.